We begin with the raw amino-acid sequence, 180 residues long: Protein SPMIP9 (180 aa).

Microtubule inner protein component of sperm flagellar doublet microtubules. Testis-specific. Detected in the germ cell lineage at all stages.

The protein resides in the nucleus. It is found in the cytoplasm. Its subcellular location is the cytoskeleton. It localises to the flagellum axoneme. Microtubule inner protein (MIP) part of the dynein-decorated doublet microtubules (DMTs) in flagella axoneme. The chain is Protein SPMIP9 from Homo sapiens (Human).